The following is a 504-amino-acid chain: Anaerobic nitric oxide reductase transcription regulator NorR (504 aa).

A 4-aspartylphosphate modification is found at D57. The Sigma-54 factor interaction domain occupies 187–416; that stretch reads MIGLSPGMTQ…LEHAIHRAVV (230 aa). Residues 215-222 and 278-287 contribute to the ATP site; these read GETGTGKE and ADNGTLFLDE. Positions 479-498 form a DNA-binding region, H-T-H motif; the sequence is WAACARMLETDVANLHRLAK.

It participates in nitrogen metabolism; nitric oxide reduction. Its function is as follows. Required for the expression of anaerobic nitric oxide (NO) reductase, acts as a transcriptional activator for at least the norVW operon. Activation also requires sigma-54. In Escherichia coli O8 (strain IAI1), this protein is Anaerobic nitric oxide reductase transcription regulator NorR.